A 505-amino-acid polypeptide reads, in one-letter code: 2,3-bisphosphoglycerate-independent phosphoglycerate mutase (505 aa).

Positions 12 and 62 each coordinate Mn(2+). Serine 62 (phosphoserine intermediate) is an active-site residue. Residues histidine 123, 153-154, arginine 185, arginine 191, 257-260, and lysine 330 contribute to the substrate site; these read RD and RPDR. Mn(2+) contacts are provided by aspartate 397, histidine 401, aspartate 438, histidine 439, and histidine 456.

Belongs to the BPG-independent phosphoglycerate mutase family. Monomer. It depends on Mn(2+) as a cofactor.

The catalysed reaction is (2R)-2-phosphoglycerate = (2R)-3-phosphoglycerate. The protein operates within carbohydrate degradation; glycolysis; pyruvate from D-glyceraldehyde 3-phosphate: step 3/5. Its function is as follows. Catalyzes the interconversion of 2-phosphoglycerate and 3-phosphoglycerate. In Staphylococcus saprophyticus subsp. saprophyticus (strain ATCC 15305 / DSM 20229 / NCIMB 8711 / NCTC 7292 / S-41), this protein is 2,3-bisphosphoglycerate-independent phosphoglycerate mutase.